The sequence spans 230 residues: Endonuclease NucS (230 aa).

Belongs to the NucS endonuclease family.

It is found in the cytoplasm. Cleaves both 3' and 5' ssDNA extremities of branched DNA structures. The protein is Endonuclease NucS of Corynebacterium aurimucosum (strain ATCC 700975 / DSM 44827 / CIP 107346 / CN-1) (Corynebacterium nigricans).